A 115-amino-acid polypeptide reads, in one-letter code: Probable non-functional T cell receptor beta variable 7-1 (115 aa).

The first 21 residues, 1–21 (MGTRLLCWAAICLLGADHTGA), serve as a signal peptide directing secretion. Positions 22 to 115 (GVSQSLRHKV…LAVYLCASSS (94 aa)) constitute an Ig-like domain.

As to quaternary structure, most probably, the alpha-beta TR is not assembled due to incorrect folding of the beta chain. Alpha-beta TR is a heterodimer composed of an alpha and beta chain; disulfide-linked. The alpha-beta TR is associated with the transmembrane signaling CD3 coreceptor proteins to form the TR-CD3 (TcR or TCR). The assembly of alpha-beta TR heterodimers with CD3 occurs in the endoplasmic reticulum where a single alpha-beta TR heterodimer associates with one CD3D-CD3E heterodimer, one CD3G-CD3E heterodimer and one CD247 homodimer forming a stable octameric structure. CD3D-CD3E and CD3G-CD3E heterodimers preferentially associate with TR alpha and TR beta chains, respectively. The association of the CD247 homodimer is the last step of TcR assembly in the endoplasmic reticulum and is required for transport to the cell surface.

It is found in the cell membrane. Its function is as follows. Probable non-functional open reading frame (ORF) of V region of the variable domain of T cell receptor (TR) beta chain. Non-functional ORF generally cannot participate in the synthesis of a productive T cell receptor (TR) chain due to altered V-(D)-J or switch recombination and/or splicing site (at mRNA level) and/or conserved amino acid change (protein level). Alpha-beta T cell receptors are antigen specific receptors which are essential to the immune response and are present on the cell surface of T lymphocytes. Recognize peptide-major histocompatibility (MH) (pMH) complexes that are displayed by antigen presenting cells (APC), a prerequisite for efficient T cell adaptive immunity against pathogens. Binding of alpha-beta TR to pMH complex initiates TR-CD3 clustering on the cell surface and intracellular activation of LCK that phosphorylates the ITAM motifs of CD3G, CD3D, CD3E and CD247 enabling the recruitment of ZAP70. In turn ZAP70 phosphorylates LAT, which recruits numerous signaling molecules to form the LAT signalosome. The LAT signalosome propagates signal branching to three major signaling pathways, the calcium, the mitogen-activated protein kinase (MAPK) kinase and the nuclear factor NF-kappa-B (NF-kB) pathways, leading to the mobilization of transcription factors that are critical for gene expression and essential for T cell growth and differentiation. The T cell repertoire is generated in the thymus, by V-(D)-J rearrangement. This repertoire is then shaped by intrathymic selection events to generate a peripheral T cell pool of self-MH restricted, non-autoaggressive T cells. Post-thymic interaction of alpha-beta TR with the pMH complexes shapes TR structural and functional avidity. This is Probable non-functional T cell receptor beta variable 7-1 from Homo sapiens (Human).